The sequence spans 33 residues: Photosystem II reaction center protein Psb30 (33 aa).

The chain crosses the membrane as a helical span at residues 5 to 25; sequence VIAQLTVLALIVASGPLVIAL.

The protein belongs to the Psb30/Ycf12 family. PSII is composed of 1 copy each of membrane proteins PsbA, PsbB, PsbC, PsbD, PsbE, PsbF, PsbH, PsbI, PsbJ, PsbK, PsbL, PsbM, PsbT, PsbX, PsbY, PsbZ, Psb30/Ycf12, peripheral proteins of the oxygen-evolving complex and a large number of cofactors. It forms dimeric complexes.

The protein localises to the plastid. It localises to the chloroplast thylakoid membrane. A core subunit of photosystem II (PSII), probably helps stabilize the reaction center. The chain is Photosystem II reaction center protein Psb30 from Marchantia polymorpha (Common liverwort).